Reading from the N-terminus, the 927-residue chain is Bifunctional glutamine synthetase adenylyltransferase/adenylyl-removing enzyme (927 aa).

Residues 1-428 are adenylyl removase; sequence MTMTDASDLL…AQFDQVFADK (428 aa). The interval 438–927 is adenylyl transferase; sequence DQAAGCIWSG…AALWARVFGA (490 aa).

It belongs to the GlnE family. Mg(2+) serves as cofactor.

The catalysed reaction is [glutamine synthetase]-O(4)-(5'-adenylyl)-L-tyrosine + phosphate = [glutamine synthetase]-L-tyrosine + ADP. It carries out the reaction [glutamine synthetase]-L-tyrosine + ATP = [glutamine synthetase]-O(4)-(5'-adenylyl)-L-tyrosine + diphosphate. Functionally, involved in the regulation of glutamine synthetase GlnA, a key enzyme in the process to assimilate ammonia. When cellular nitrogen levels are high, the C-terminal adenylyl transferase (AT) inactivates GlnA by covalent transfer of an adenylyl group from ATP to specific tyrosine residue of GlnA, thus reducing its activity. Conversely, when nitrogen levels are low, the N-terminal adenylyl removase (AR) activates GlnA by removing the adenylyl group by phosphorolysis, increasing its activity. The regulatory region of GlnE binds the signal transduction protein PII (GlnB) which indicates the nitrogen status of the cell. This chain is Bifunctional glutamine synthetase adenylyltransferase/adenylyl-removing enzyme, found in Burkholderia pseudomallei (strain K96243).